A 430-amino-acid polypeptide reads, in one-letter code: Gamma-glutamyl phosphate reductase (430 aa).

The protein belongs to the gamma-glutamyl phosphate reductase family.

Its subcellular location is the cytoplasm. The catalysed reaction is L-glutamate 5-semialdehyde + phosphate + NADP(+) = L-glutamyl 5-phosphate + NADPH + H(+). It functions in the pathway amino-acid biosynthesis; L-proline biosynthesis; L-glutamate 5-semialdehyde from L-glutamate: step 2/2. Functionally, catalyzes the NADPH-dependent reduction of L-glutamate 5-phosphate into L-glutamate 5-semialdehyde and phosphate. The product spontaneously undergoes cyclization to form 1-pyrroline-5-carboxylate. The protein is Gamma-glutamyl phosphate reductase of Rhodopseudomonas palustris (strain ATCC BAA-98 / CGA009).